A 143-amino-acid chain; its full sequence is Large ribosomal subunit protein uL13 (143 aa).

The protein belongs to the universal ribosomal protein uL13 family. Part of the 50S ribosomal subunit.

This protein is one of the early assembly proteins of the 50S ribosomal subunit, although it is not seen to bind rRNA by itself. It is important during the early stages of 50S assembly. The polypeptide is Large ribosomal subunit protein uL13 (Desulfitobacterium hafniense (strain DSM 10664 / DCB-2)).